The following is a 32-amino-acid chain: Photosystem I reaction center subunit XII (32 aa).

The helical transmembrane segment at 10–27 (VVALVSAFVTGILALRLG) threads the bilayer.

The protein belongs to the PsaM family.

The protein resides in the plastid. Its subcellular location is the chloroplast thylakoid membrane. This chain is Photosystem I reaction center subunit XII, found in Staurastrum punctulatum (Green alga).